The following is a 336-amino-acid chain: Serpentine receptor class gamma-13 (336 aa).

8 consecutive transmembrane segments (helical) span residues 32-52 (LKYI…FLII), 68-88 (FFII…SEIL), 93-113 (FIYV…PSIF), 133-153 (VFLS…SAIW), 156-176 (ILTP…WNVL), 210-230 (FIVS…ALLI), 246-266 (TMVL…FAFF), and 277-297 (LLRV…IIFI).

The protein belongs to the nematode receptor-like protein srg family.

Its subcellular location is the membrane. In Caenorhabditis elegans, this protein is Serpentine receptor class gamma-13 (srg-13).